A 417-amino-acid polypeptide reads, in one-letter code: Probable serine/threonine-protein kinase WNK9 (417 aa).

Residues M1 to V23 are disordered. Positions I32–L289 constitute a Protein kinase domain. ATP contacts are provided by residues T113 to F116 and K163. Catalysis depends on D180, which acts as the Proton acceptor.

The protein belongs to the protein kinase superfamily. Ser/Thr protein kinase family. WNK subfamily.

The catalysed reaction is L-seryl-[protein] + ATP = O-phospho-L-seryl-[protein] + ADP + H(+). It catalyses the reaction L-threonyl-[protein] + ATP = O-phospho-L-threonyl-[protein] + ADP + H(+). The sequence is that of Probable serine/threonine-protein kinase WNK9 (WNK9) from Oryza sativa subsp. japonica (Rice).